A 124-amino-acid chain; its full sequence is Quinol oxidase subunit 4 (124 aa).

The next 3 membrane-spanning stretches (helical) occupy residues 16–36, 44–64, and 78–98; these read IVGFALSIVLTLLALWVAVYT, LWIIFGFAFIQAALQLLMFMH, and TLFGFFGAIVIVLGSIWIFAA.

The protein belongs to the cytochrome c oxidase bacterial subunit 4 family.

Its subcellular location is the cell membrane. It carries out the reaction 2 a quinol + O2 = 2 a quinone + 2 H2O. In terms of biological role, catalyzes quinol oxidation with the concomitant reduction of oxygen to water. Major component for energy conversion during vegetative growth. The polypeptide is Quinol oxidase subunit 4 (qoxD) (Bacillus spizizenii (strain ATCC 23059 / NRRL B-14472 / W23) (Bacillus subtilis subsp. spizizenii)).